Here is a 229-residue protein sequence, read N- to C-terminus: PKHD-type hydroxylase BRADO6316 (229 aa).

One can recognise a Fe2OG dioxygenase domain in the interval 78-180 (QIFPPLFNRY…RVASFFWLQS (103 aa)). Positions 98, 100, and 161 each coordinate Fe cation. Arginine 171 is a binding site for 2-oxoglutarate.

It depends on Fe(2+) as a cofactor. Requires L-ascorbate as cofactor.

In Bradyrhizobium sp. (strain ORS 278), this protein is PKHD-type hydroxylase BRADO6316.